The chain runs to 977 residues: Serine/threonine-protein kinase N2 (977 aa).

3 REM-1 domains span residues 24-100, 114-194, and 200-280; these read NLDF…HIVV, DTPK…TSEI, and DVTT…ELPK. The region spanning 298–468 is the C2 domain; it reads PPNSPRQSIM…LYLEPQGTLF (171 aa). 2 disordered regions span residues 342 to 381 and 531 to 576; these read GRSK…LSKS and AADL…KRNS. Over residues 358 to 378 the composition is skewed to polar residues; that stretch reads EARSSFMSRGNKNKSGSSRTL. The region spanning 650-909 is the Protein kinase domain; that stretch reads FKCVAVLGRG…AEEVKRHPFF (260 aa). ATP contacts are provided by residues 656 to 664 and lysine 679; that span reads LGRGHFGKV. Aspartate 775 acts as the Proton acceptor in catalysis. The AGC-kinase C-terminal domain occupies 910–977; that stretch reads RDMDWPGLLA…ADFDYIADWC (68 aa).

The protein belongs to the protein kinase superfamily. AGC Ser/Thr protein kinase family. PKC subfamily. Post-translationally, autophosphorylated. Phosphorylated. In terms of processing, proteolytically cleaved.

It is found in the cytoplasm. The protein resides in the nucleus. Its subcellular location is the membrane. It localises to the cell projection. The protein localises to the lamellipodium. It is found in the cytoskeleton. The protein resides in the cleavage furrow. Its subcellular location is the midbody. It localises to the cell junction. It catalyses the reaction L-seryl-[protein] + ATP = O-phospho-L-seryl-[protein] + ADP + H(+). The enzyme catalyses L-threonyl-[protein] + ATP = O-phospho-L-threonyl-[protein] + ADP + H(+). Kinase activity is activated upon binding to GTP-bound Rho/Rac GTPases. Activated by lipids, particularly cardiolipin and to a lesser extent by other acidic phospholipids and unsaturated fatty acids. Two specific sites, Thr-809 (activation loop of the kinase domain) and Thr-951 (turn motif), may be needed to be phosphorylated for its full activation. Pkc-related serine/threonine-protein kinase and Rho/Rac effector protein that participates in specific signal transduction responses in the cell. May play a role in the regulation of cell cycle progression, actin cytoskeleton assembly, cell migration, cell adhesion and transcription activation signaling processes. This Danio rerio (Zebrafish) protein is Serine/threonine-protein kinase N2 (pkn2).